The sequence spans 675 residues: Methionine--tRNA ligase (675 aa).

The short motif at 15–25 is the 'HIGH' region element; sequence PYANGSIHLGH. 4 residues coordinate Zn(2+): Cys-146, Cys-149, Cys-159, and Cys-162. Residues 332–336 carry the 'KMSKS' region motif; it reads KMSKS. Lys-335 serves as a coordination point for ATP. Positions 573-675 constitute a tRNA-binding domain; sequence DFAKVDMRIA…SGAQPGMQVK (103 aa).

It belongs to the class-I aminoacyl-tRNA synthetase family. MetG type 1 subfamily. As to quaternary structure, homodimer. Zn(2+) serves as cofactor.

The protein resides in the cytoplasm. The catalysed reaction is tRNA(Met) + L-methionine + ATP = L-methionyl-tRNA(Met) + AMP + diphosphate. Is required not only for elongation of protein synthesis but also for the initiation of all mRNA translation through initiator tRNA(fMet) aminoacylation. In Yersinia pseudotuberculosis serotype O:3 (strain YPIII), this protein is Methionine--tRNA ligase.